Consider the following 291-residue polypeptide: Malolactic fermentation system transcriptional activator (291 aa).

Residues 1–60 enclose the HTH lysR-type domain; that stretch reads MSLNLRDLEYFYQLSKLRSFTNVAKHFRVSQPTISYAIKRLETYYDCDLFYKDSSHQVVD. The segment at residues 20-39 is a DNA-binding region (H-T-H motif); it reads FTNVAKHFRVSQPTISYAIK.

The protein belongs to the LysR transcriptional regulatory family.

The protein localises to the cytoplasm. Functionally, required for malolactic fermentation. It is most probably a transcriptional activator. The sequence is that of Malolactic fermentation system transcriptional activator (mleR) from Lactococcus lactis subsp. lactis (strain IL1403) (Streptococcus lactis).